The sequence spans 298 residues: ADP/ATP translocase 2 (298 aa).

N-acetylmethionine is present on methionine 1. Topologically, residues methionine 1–serine 7 are mitochondrial intermembrane. An N-acetylthreonine; in ADP/ATP translocase 2, N-terminally processed modification is found at threonine 2. The stretch at valine 6 to isoleucine 98 is one Solcar 1 repeat. Serine 7 carries the phosphoserine modification. A helical membrane pass occupies residues phenylalanine 8–glutamine 37. Lysine 23 bears the N6-malonyllysine mark. Topologically, residues valine 38–asparagine 74 are mitochondrial matrix. Lysine 43 carries the post-translational modification N6-succinyllysine. Lysine 52 carries the N6,N6,N6-trimethyllysine; alternate modification. An N6,N6-dimethyllysine; alternate modification is found at lysine 52. The residue at position 52 (lysine 52) is an N6-methyllysine; alternate. The chain crosses the membrane as a helical span at residues leucine 75–phenylalanine 99. Residues arginine 80 and lysine 92 each contribute to the ADP site. N6-malonyllysine occurs at positions 92 and 96. Residues leucine 100–phenylalanine 109 lie on the Mitochondrial intermembrane side of the membrane. Position 105 is an N6-acetyllysine; alternate (lysine 105). An N6-succinyllysine; alternate modification is found at lysine 105. The helical transmembrane segment at tryptophan 110 to phenylalanine 130 threads the bilayer. Solcar repeat units lie at residues arginine 111–methionine 201 and isoleucine 212–tyrosine 297. Over valine 131–asparagine 178 the chain is Mitochondrial matrix. An N6-methyllysine; alternate modification is found at lysine 147. N6-acetyllysine; alternate occurs at positions 147 and 155. An N6-succinyllysine; alternate mark is found at lysine 147 and lysine 155. Lysine 147 bears the N6-malonyllysine; alternate mark. Residues lysine 163 and lysine 166 each carry the N6-acetyllysine modification. Residues valine 179 to lysine 199 traverse the membrane as a helical segment. Topologically, residues glycine 200–isoleucine 210 are mitochondrial intermembrane. A helical membrane pass occupies residues phenylalanine 211–phenylalanine 231. Topologically, residues aspartate 232–glycine 273 are mitochondrial matrix. Arginine 235 lines the ADP pocket. The interval arginine 235–methionine 240 is important for transport activity. Positions arginine 235–methionine 240 match the Nucleotide carrier signature motif motif. Lysine 268 bears the N6-acetyllysine; alternate mark. Position 268 is an N6-succinyllysine; alternate (lysine 268). A helical membrane pass occupies residues alanine 274–tyrosine 291. Topologically, residues aspartate 292 to threonine 298 are mitochondrial intermembrane.

It belongs to the mitochondrial carrier (TC 2.A.29) family. Monomer. Component of the MMXD complex, which includes CIAO1, ERCC2, CIAO2B, MMS19 and SLC25A5/ANT2. Interacts with AK4. Interacts with TIMM44; leading to inhibit the presequence translocase TIMM23, thereby promoting stabilization of PINK1. Post-translationally, trimethylated by ANTKMT at Lys-52. Present in kidney, brain, heart, liver and skeletal muscle.

The protein localises to the mitochondrion inner membrane. It localises to the membrane. The catalysed reaction is ADP(in) + ATP(out) = ADP(out) + ATP(in). It catalyses the reaction H(+)(in) = H(+)(out). Its activity is regulated as follows. The matrix-open state (m-state) is inhibited by the membrane-permeable bongkrekic acid (BKA). The cytoplasmic-open state (c-state) is inhibited by the membrane-impermeable toxic inhibitor carboxyatractyloside (CATR). Proton transporter activity is inhibited by ADP:ATP antiporter activity. Its function is as follows. ADP:ATP antiporter that mediates import of ADP into the mitochondrial matrix for ATP synthesis, and export of ATP out to fuel the cell. Cycles between the cytoplasmic-open state (c-state) and the matrix-open state (m-state): operates by the alternating access mechanism with a single substrate-binding site intermittently exposed to either the cytosolic (c-state) or matrix (m-state) side of the inner mitochondrial membrane. In addition to its ADP:ATP antiporter activity, also involved in mitochondrial uncoupling and mitochondrial permeability transition pore (mPTP) activity. Plays a role in mitochondrial uncoupling by acting as a proton transporter: proton transport uncouples the proton flows via the electron transport chain and ATP synthase to reduce the efficiency of ATP production and cause mitochondrial thermogenesis. Proton transporter activity is inhibited by ADP:ATP antiporter activity, suggesting that SLC25A5/ANT2 acts as a master regulator of mitochondrial energy output by maintaining a delicate balance between ATP production (ADP:ATP antiporter activity) and thermogenesis (proton transporter activity). Proton transporter activity requires free fatty acids as cofactor, but does not transport it. Probably mediates mitochondrial uncoupling in tissues that do not express UCP1. Also plays a key role in mPTP opening, a non-specific pore that enables free passage of the mitochondrial membranes to solutes of up to 1.5 kDa, and which contributes to cell death. It is however unclear if SLC25A5/ANT2 constitutes a pore-forming component of mPTP or regulates it. Acts as a regulator of mitophagy independently of ADP:ATP antiporter activity: promotes mitophagy via interaction with TIMM44, leading to inhibit the presequence translocase TIMM23, thereby promoting stabilization of PINK1. As part of the mitotic spindle-associated MMXD complex it may play a role in chromosome segregation. The protein is ADP/ATP translocase 2 of Rattus norvegicus (Rat).